The chain runs to 233 residues: tRNA (guanine-N(1)-)-methyltransferase (233 aa).

S-adenosyl-L-methionine is bound by residues G113 and 133–138; that span reads VGDYVL.

This sequence belongs to the RNA methyltransferase TrmD family. Homodimer.

The protein resides in the cytoplasm. It catalyses the reaction guanosine(37) in tRNA + S-adenosyl-L-methionine = N(1)-methylguanosine(37) in tRNA + S-adenosyl-L-homocysteine + H(+). Functionally, specifically methylates guanosine-37 in various tRNAs. The chain is tRNA (guanine-N(1)-)-methyltransferase from Rhizobium etli (strain ATCC 51251 / DSM 11541 / JCM 21823 / NBRC 15573 / CFN 42).